Reading from the N-terminus, the 226-residue chain is RNA-binding protein 24 (226 aa).

An RRM domain is found at 11-88; the sequence is TKIFVGGLPY…RKANVNLAYL (78 aa).

The protein localises to the nucleus. The protein resides in the cytoplasm. Its function is as follows. Multifunctional RNA-binding protein involved in the regulation of pre-mRNA splicing, mRNA stability and mRNA translation important for cell fate decision and differentiation. Plays a major role in pre-mRNA alternative splicing regulation. Mediates preferentially muscle-specific exon inclusion in numerous mRNAs important for striated cardiac and skeletal muscle cell differentiation. Binds to intronic splicing enhancer (ISE) composed of stretches of GU-rich motifs localized in flanking intron of exon that will be included by alternative splicing. Involved in embryonic stem cell (ESC) transition to cardiac cell differentiation by promoting pre-mRNA alternative splicing events of several pluripotency and/or differentiation genes. Plays a role in the regulation of mRNA stability and mRNA translation to which it is bound. Involved in myogenic differentiation by regulating myog levels. Binds to a huge amount of mRNAs. Required for embryonic heart development, sarcomer and M-band formation in striated muscles. The polypeptide is RNA-binding protein 24 (rbm24) (Xenopus tropicalis (Western clawed frog)).